We begin with the raw amino-acid sequence, 252 residues long: MPTTERVAKVVLVDIEGTTTSISFVHDVLFPYAKNNVKKFLEESWESSSEVKQIVRELQQVPQYAEYTATLRVPPKEVDVQVITGFVRYLIDKDLKVTPLKTLQGLIWQQGYETGELMGHVFNDVPGAFEAWREAGLRIAVYSSGSVAAQKLIFKYSIVGDLLTHLSTHFDTHVGHKQESQSYANIAQSLGEDPSHILFLTDIPGEAAAARSAGLQTIILQRPGNTPLTDDQKYSNELIADFSSLHTLQLPE.

Residues aspartate 14 and glutamate 16 each contribute to the Mg(2+) site. Substrate is bound by residues 143-144 and lysine 177; that span reads SS. A Mg(2+)-binding site is contributed by aspartate 202.

This sequence belongs to the HAD-like hydrolase superfamily. MasA/MtnC family. In terms of assembly, monomer. Mg(2+) serves as cofactor.

The protein localises to the cytoplasm. It localises to the nucleus. It catalyses the reaction 5-methylsulfanyl-2,3-dioxopentyl phosphate + H2O = 1,2-dihydroxy-5-(methylsulfanyl)pent-1-en-3-one + phosphate. It participates in amino-acid biosynthesis; L-methionine biosynthesis via salvage pathway; L-methionine from S-methyl-5-thio-alpha-D-ribose 1-phosphate: step 3/6. It functions in the pathway amino-acid biosynthesis; L-methionine biosynthesis via salvage pathway; L-methionine from S-methyl-5-thio-alpha-D-ribose 1-phosphate: step 4/6. Functionally, bifunctional enzyme that catalyzes the enolization of 2,3-diketo-5-methylthiopentyl-1-phosphate (DK-MTP-1-P) into the intermediate 2-hydroxy-3-keto-5-methylthiopentenyl-1-phosphate (HK-MTPenyl-1-P), which is then dephosphorylated to form the acireductone 1,2-dihydroxy-3-keto-5-methylthiopentene (DHK-MTPene). This chain is Enolase-phosphatase E1, found in Drosophila pseudoobscura pseudoobscura (Fruit fly).